Consider the following 298-residue polypeptide: Acetylglutamate kinase (298 aa).

Substrate-binding positions include 69-70 (GG), arginine 91, and asparagine 191.

The protein belongs to the acetylglutamate kinase family. ArgB subfamily.

The protein resides in the cytoplasm. It carries out the reaction N-acetyl-L-glutamate + ATP = N-acetyl-L-glutamyl 5-phosphate + ADP. It functions in the pathway amino-acid biosynthesis; L-arginine biosynthesis; N(2)-acetyl-L-ornithine from L-glutamate: step 2/4. Functionally, catalyzes the ATP-dependent phosphorylation of N-acetyl-L-glutamate. The chain is Acetylglutamate kinase from Neisseria meningitidis serogroup C / serotype 2a (strain ATCC 700532 / DSM 15464 / FAM18).